A 200-amino-acid polypeptide reads, in one-letter code: Recombination protein RecR (200 aa).

A C4-type zinc finger spans residues 57 to 72 (CRQCRTLTEQELCPQC). Residues 80-175 (TQLCVVEGPM…VASRIAHGVP (96 aa)) enclose the Toprim domain.

Belongs to the RecR family.

May play a role in DNA repair. It seems to be involved in an RecBC-independent recombinational process of DNA repair. It may act with RecF and RecO. The protein is Recombination protein RecR of Pseudomonas putida (strain W619).